A 72-amino-acid chain; its full sequence is Gas vesicle protein A (72 aa).

The protein belongs to the gas vesicle GvpA family. The gas vesicle shell is 2 nm thick and consists of a single layer of this protein. It forms helical ribs nearly perpendicular to the long axis of the vesicle.

The protein resides in the gas vesicle shell. Gas vesicles are hollow, gas filled proteinaceous nanostructures found in some microorganisms. During planktonic growth they allow positioning of the organism at a favorable depth for light or nutrient acquisition. GvpA forms the protein shell. The protein is Gas vesicle protein A of Haloquadratum walsbyi (strain DSM 16790 / HBSQ001).